Here is a 5202-residue protein sequence, read N- to C-terminus: Usherin (5202 aa).

Positions 1-31 (MNCPVLSLGSGFLFQVIEMLIFAYFASISLT) are cleaved as a signal peptide. Over 32-5042 (ESRGLFPRLE…KSTEFYSELW (5011 aa)) the chain is Extracellular. Residues 271–517 (QDFRLYQVAL…AVDEITISGR (247 aa)) form the Laminin N-terminal domain. Residues N361 and N451 are each glycosylated (N-linked (GlcNAc...) asparagine). Cystine bridges form between C518–C527, C520–C536, C538–C549, C552–C572, C575–C584, C577–C605, C608–C617, C620–C638, C641–C655, C643–C662, C664–C673, C676–C691, C694–C708, C696–C715, C717–C726, C729–C744, C747–C759, C749–C766, C768–C777, C780–C792, C795–C808, C797–C815, C817–C826, C829–C844, C847–C861, C849–C868, C870–C879, C882–C897, C900–C913, C902–C920, C922–C931, C934–C948, C951–C963, C953–C970, C972–C982, C985–C999, C1002–C1014, C1004–C1021, C1023–C1032, and C1035–C1050. Laminin EGF-like domains follow at residues 518–574 (CQCH…NCKP), 575–640 (CQCN…VCKP), 641–693 (CDCD…GCSP), 694–746 (CNCN…GCEP), 747–794 (CQCN…NCKA), 795–846 (CDCD…LCLP), 847–899 (CNCD…HCQM), 900–950 (CECD…GCLP), 951–1001 (CSCH…RCQP), and 1002–1052 (CNCH…GCSK). N-linked (GlcNAc...) asparagine glycans are attached at residues N587 and N611. A glycan (N-linked (GlcNAc...) asparagine) is linked at N650. N-linked (GlcNAc...) asparagine glycosylation occurs at N697. N839, N856, and N862 each carry an N-linked (GlcNAc...) asparagine glycan. N-linked (GlcNAc...) asparagine glycosylation occurs at N888. N-linked (GlcNAc...) asparagine glycosylation occurs at N944. N1011 carries an N-linked (GlcNAc...) asparagine glycan. 4 consecutive Fibronectin type-III domains span residues 1058–1146 (PPPR…TKPG), 1148–1244 (PEGN…APPQ), 1245–1363 (RLSP…SAPV), and 1364–1468 (FMIP…AAPA). Residues N1071, N1151, and N1174 are each glycosylated (N-linked (GlcNAc...) asparagine). Residues N1379, N1388, N1479, and N1635 are each glycosylated (N-linked (GlcNAc...) asparagine). 2 consecutive Laminin G-like domains span residues 1517–1709 (MKGI…WEGC) and 1714–1891 (NEGA…LDGC). A disulfide bond links C1672 and C1709. Residue N1779 is glycosylated (N-linked (GlcNAc...) asparagine). Cysteines 1862 and 1891 form a disulfide. Fibronectin type-III domains follow at residues 1869–1955 (TRGA…AAPQ), 1957–2054 (VPTP…TPQE), 2055–2144 (APQE…LPPE), 2145–2239 (HVDS…TDED), 2243–2330 (GVPA…APPE), 2331–2433 (GTVN…MPPG), 2437–2531 (GVLP…TAED), 2535–2622 (PVVP…TLPG), 2624–2722 (PEGI…TRPS), 2726–2819 (GVQP…THPT), 2820–2923 (VPQN…TLAG), 2927–3018 (RGAN…TCDG), 3022–3112 (GMLP…TPSD), and 3113–3209 (IPTP…CCEE). N1903, N2011, N2014, N2048, N2130, N2182, N2195, N2258, N2285, N2322, N2377, N2382, N2407, and N2413 each carry an N-linked (GlcNAc...) asparagine glycan. N-linked (GlcNAc...) asparagine glycosylation is found at N2581, N2584, N2656, N2710, N2770, and N2788. N-linked (GlcNAc...) asparagine glycosylation is found at N2930, N2937, N2970, N3032, and N3099. N-linked (GlcNAc...) asparagine glycans are attached at residues N3217, N3330, N3419, and N3433. 2 disulfide bridges follow: C3371–C3444 and C3399–C3425. Fibronectin type-III domains are found at residues 3403–3497 (CPAS…TKED), 3501–3589 (GVSP…TQGV), 3592–3682 (SILP…AAPE), 3684–3770 (VWVT…TPMS), 3774–3865 (EIYP…TPEA), 3866–3963 (APMD…TLEA), 3964–4067 (PPQD…SSPS), 4068–4153 (GLRN…TDEA), 4157–4261 (SQLA…TLQA), 4262–4357 (PPEG…AAPS), 4358–4445 (EVSP…ALPE), 4446–4530 (NMDS…TSPS), 4534–4630 (GMEP…TPEI), 4636–4733 (PPPH…TGPA), 4734–4827 (PPEG…THPA), and 4828–4927 (PPSG…SFTT). N-linked (GlcNAc...) asparagine glycosylation is found at N3653, N3694, N3733, N3780, and N3849. A glycan (N-linked (GlcNAc...) asparagine) is linked at N3984. N-linked (GlcNAc...) asparagine glycosylation is found at N4202, N4226, N4317, and N4418. The segment at 4518-4541 (ILSPLVKDRTSPSAPSGMEPPKLQ) is disordered. N-linked (GlcNAc...) asparagine glycosylation is found at N4564, N4583, N4691, N4754, and N4800. N4943 and N4950 each carry an N-linked (GlcNAc...) asparagine glycan. Residues 5043–5063 (FIVLMAMLGLILLAIFLSLIL) form a helical membrane-spanning segment. At 5064–5202 (QRKIHKEPYI…ERTTFTDTHL (139 aa)) the chain is on the cytoplasmic side. A PDZ-binding motif is present at residues 5200–5202 (THL).

Interacts with collagen IV and fibronectin via its laminin EGF-like domains. Interaction with collagen may be required for stable integration into the basement membrane. Interacts with NINL. Interacts with USH1C. Component of USH2 complex, composed of ADGRV1, PDZD7, USH2A and WHRN. Interacts with ADGRV1/MASS1 (via N-terminal PDZ domain). Interacts (via the cytoplasmic region) with WHRN. Interacts (via the cytoplasmic region) with PDZD7. Interacts (via the cytoplasmic region) with VEZT and MYO7A (via MyTH4-FERM domains); the interaction associates VEZT with the USH2 complex at the stereocilia base. As to expression, present in the basement membrane of many, but not all tissues. Expressed in retina, cochlea, small and large intestine, pancreas, bladder, prostate, esophagus, trachea, thymus, salivary glands, placenta, ovary, fallopian tube, uterus and testis. Absent in many other tissues such as heart, lung, liver, kidney and brain. In the retina, it is present in the basement membranes in the Bruch's layer choroid capillary basement membranes, where it localizes just beneath the retinal pigment epithelial cells (at protein level). Weakly expressed. Isoform 2 is expressed in fetal eye, cochlea and heart, and at very low level in brain, CNS, intestine, skeleton, tongue, kidney and lung. Isoform 2 is not expressed in stomach and liver. In adult tissues, isoform 2 is expressed in neural retina and testis, and at low level in brain, heart, kidney and liver. Isoform 1 displays a similar pattern of expression but is expressed at very low level in fetal cochlea.

The protein resides in the cell projection. Its subcellular location is the stereocilium membrane. It is found in the secreted. In terms of biological role, involved in hearing and vision as member of the USH2 complex. In the inner ear, required for the maintenance of the hair bundle ankle formation, which connects growing stereocilia in developing cochlear hair cells. In retina photoreceptors, the USH2 complex is required for the maintenance of periciliary membrane complex that seems to play a role in regulating intracellular protein transport. This is Usherin (USH2A) from Homo sapiens (Human).